The chain runs to 310 residues: Homoserine kinase (310 aa).

85 to 95 contacts ATP; it reads PKGLGLGSSGA.

The protein belongs to the GHMP kinase family. Homoserine kinase subfamily.

It localises to the cytoplasm. The catalysed reaction is L-homoserine + ATP = O-phospho-L-homoserine + ADP + H(+). The protein operates within amino-acid biosynthesis; L-threonine biosynthesis; L-threonine from L-aspartate: step 4/5. In terms of biological role, catalyzes the ATP-dependent phosphorylation of L-homoserine to L-homoserine phosphate. This Thermoplasma acidophilum (strain ATCC 25905 / DSM 1728 / JCM 9062 / NBRC 15155 / AMRC-C165) protein is Homoserine kinase.